Consider the following 111-residue polypeptide: Nucleoid-associated protein Cphamn1_1179 (111 aa).

This sequence belongs to the YbaB/EbfC family. In terms of assembly, homodimer.

It localises to the cytoplasm. The protein resides in the nucleoid. In terms of biological role, binds to DNA and alters its conformation. May be involved in regulation of gene expression, nucleoid organization and DNA protection. The protein is Nucleoid-associated protein Cphamn1_1179 of Chlorobium phaeobacteroides (strain BS1).